Reading from the N-terminus, the 68-residue chain is Basic phospholipase A2 homolog BdipTx-I (68 aa).

A disulfide bridge links Cys-28 with Cys-44.

It belongs to the phospholipase A2 family. Group II subfamily. K49 sub-subfamily. Expressed by the venom gland.

The protein localises to the secreted. Snake venom phospholipase A2 (PLA2) that lacks enzymatic activity. Is myotoxic, induces edema, and causes systemic effects (renal changes that lead to proteinuria) on mice. A model of myotoxic mechanism has been proposed: an apo Lys49-PLA2 is activated by the entrance of a hydrophobic molecule (e.g. fatty acid) at the hydrophobic channel of the protein leading to a reorientation of a monomer. This reorientation causes a transition between 'inactive' to 'active' states, causing alignment of C-terminal and membrane-docking sites (MDoS) side-by-side and putting the membrane-disruption sites (MDiS) in the same plane, exposed to solvent and in a symmetric position for both monomers. The MDoS region stabilizes the toxin on membrane by the interaction of charged residues with phospholipid head groups. Subsequently, the MDiS region destabilizes the membrane with penetration of hydrophobic residues. This insertion causes a disorganization of the membrane, allowing an uncontrolled influx of ions (i.e. calcium and sodium), and eventually triggering irreversible intracellular alterations and cell death. This chain is Basic phospholipase A2 homolog BdipTx-I, found in Bothrops diporus (Chaco lancehead).